A 318-amino-acid chain; its full sequence is NADH-ubiquinone oxidoreductase chain 1 (318 aa).

8 consecutive transmembrane segments (helical) span residues 2–22, 69–89, 100–120, 147–167, 171–191, 222–242, 253–273, and 294–314; these read PMIN…FLML, ALYI…WTPL, LGLL…LWSG, AIIL…TLIT, HIWL…STLA, LFFM…TMIF, ELYT…FLWI, and LPLT…IASI.

The protein belongs to the complex I subunit 1 family. As to quaternary structure, core subunit of respiratory chain NADH dehydrogenase (Complex I) which is composed of 45 different subunits.

The protein resides in the mitochondrion inner membrane. It catalyses the reaction a ubiquinone + NADH + 5 H(+)(in) = a ubiquinol + NAD(+) + 4 H(+)(out). Functionally, core subunit of the mitochondrial membrane respiratory chain NADH dehydrogenase (Complex I) which catalyzes electron transfer from NADH through the respiratory chain, using ubiquinone as an electron acceptor. Essential for the catalytic activity and assembly of complex I. The polypeptide is NADH-ubiquinone oxidoreductase chain 1 (MT-ND1) (Hylobates lar (Lar gibbon)).